We begin with the raw amino-acid sequence, 345 residues long: 3'-5' exoribonuclease 1 (345 aa).

Composition is skewed to basic and acidic residues over residues 1–11 (MEDERGREHGG) and 19–40 (PRPECEESRPLSVEKKQRCRLD). The tract at residues 1 to 40 (MEDERGREHGGDAAQQKTPRPECEESRPLSVEKKQRCRLD) is disordered. The residue at position 58 (Ser58) is a Phosphoserine. Residues 72–106 (INRMSKEELRAKLSEFKLETRGVKDVLKKRLKNYY) form the SAP domain. Positions 126 to 302 (ICIIDFEATC…DDSKNIARIA (177 aa)) constitute an Exonuclease domain. Residues Asp130 and Glu132 each contribute to the Mg(2+) site. Catalysis depends on Glu132, which acts as the Proton acceptor. Glu132 and Ala133 together coordinate AMP. A Mg(2+)-binding site is contributed by Asp230. Catalysis depends on His289, which acts as the Proton acceptor. His289 is an AMP binding site. Asp294 is a Mg(2+) binding site.

In terms of assembly, identified in a histone pre-mRNA complex, at least composed of ERI1, LSM11, SLBP, SNRPB, SYNCRIP and YBX1. Binds to 40S and 60S ribosomal subunits and to 80S assembled ribosomes. Interacts in a cooperative manner with SLBP to the mature 3'-end of histone mRNAs. Found in a ternary complex with SLBP and the stem-loop structure of the 3'-end of histone mRNAs. Mg(2+) is required as a cofactor.

The protein localises to the cytoplasm. It is found in the nucleus. It localises to the nucleolus. The enzyme catalyses Exonucleolytic cleavage in the 3'- to 5'-direction to yield nucleoside 5'-phosphates.. Its activity is regulated as follows. Although it can bind simultaneously with SLBP to the 3'-end of histone mRNA, the presence of SLBP prevents the exonuclease activity. Its function is as follows. RNA exonuclease that binds to the 3'-end of histone mRNAs and degrades them, suggesting that it plays an essential role in histone mRNA decay after replication. A 2' and 3'-hydroxyl groups at the last nucleotide of the histone 3'-end is required for efficient 3'-end histone mRNA exonuclease activity and degradation of RNA substrates. Also able to degrade the 3'-overhangs of short interfering RNAs (siRNAs) in vitro, suggesting a possible role as regulator of RNA interference (RNAi). Required for binding the 5'-ACCCA-3' sequence present in stem-loop structure. Able to bind other mRNAs. Required for 5.8S rRNA 3'-end processing. Also binds to 5.8s ribosomal RNA. Binds with high affinity to the stem-loop structure of replication-dependent histone pre-mRNAs. In vitro, does not have sequence specificity. In vitro, has weak DNA exonuclease activity. In vitro, shows biphasic kinetics such that there is rapid hydrolysis of the last three unpaired RNA nucleotides in the 39 flanking sequence followed by a much slower cleavage through the stem that occurs over a longer incubation period in the order of hours. ERI1-mediated RNA metabolism plays a key role in chondrogenesis. This is 3'-5' exoribonuclease 1 (Eri1) from Rattus norvegicus (Rat).